Consider the following 564-residue polypeptide: Keratin, type II cytoskeletal 6A (564 aa).

A compositionally biased stretch (low complexity) spans 1–11; that stretch reads MASTSTTIRSH. The disordered stretch occupies residues 1 to 23; the sequence is MASTSTTIRSHSSSRRGFSANSA. An N-acetylalanine modification is found at alanine 2. Residues 2 to 162 form a head region; it reads ASTSTTIRSH…DPTIQRVRAE (161 aa). The segment at 163–198 is coil 1A; that stretch reads EREQIKTLNNKFASFIDKVRFLEQQNKVLETKWTLL. An IF rod domain is found at 163–476; it reads EREQIKTLNN…KLLEGEECRL (314 aa). Residues 199–217 form a linker 1 region; the sequence is QEQGTKTVRQNLEPLFEQY. The coil 1B stretch occupies residues 218–309; it reads INNLRRQLDS…ALYDAELSQM (92 aa). Residues 310 to 333 form a linker 12 region; it reads QTHISDTSVVLSMDNNRNLDLDSI. The coil 2 stretch occupies residues 334–472; the sequence is IAEVKAQYEE…ATYRKLLEGE (139 aa). A tail region spans residues 473–564; the sequence is ECRLNGEGVG…SSSSRKSYKH (92 aa).

Belongs to the intermediate filament family. As to quaternary structure, heterodimer of a type I and a type II keratin. KRT6 isomers associate with KRT16 and/or KRT17. Interacts with TCHP. As to expression, expressed in the corneal epithelium (at protein level).

Its function is as follows. Epidermis-specific type I keratin involved in wound healing. Involved in the activation of follicular keratinocytes after wounding, while it does not play a major role in keratinocyte proliferation or migration. Participates in the regulation of epithelial migration by inhibiting the activity of SRC during wound repair. The polypeptide is Keratin, type II cytoskeletal 6A (KRT6A) (Homo sapiens (Human)).